A 118-amino-acid chain; its full sequence is V-type proton ATPase subunit G 3 (118 aa).

Residues 3–54 (SQSQGIQQLLQAEKRAKDKLEEAKKRKNKRLRQAKEEATADIDQYRLKREAD) are a coiled coil. Positions 19–39 (KDKLEEAKKRKNKRLRQAKEE) are disordered.

The protein belongs to the V-ATPase G subunit family. As to quaternary structure, V-ATPase is a heteromultimeric enzyme made up of two complexes: the ATP-hydrolytic V1 complex and the proton translocation V0 complex. The V1 complex consists of three catalytic AB heterodimers that form a heterohexamer, three peripheral stalks each consisting of EG heterodimers, one central rotor including subunits D and F, and the regulatory subunits C and H. The proton translocation complex V0 consists of the proton transport subunit a, a ring of proteolipid subunits c9c'', rotary subunit d, subunits e and f, and two accessory subunits.

In terms of biological role, subunit of the V1 complex of vacuolar(H+)-ATPase (V-ATPase), a multisubunit enzyme composed of a peripheral complex (V1) that hydrolyzes ATP and a membrane integral complex (V0) that translocates protons. V-ATPase is responsible for acidifying and maintaining the pH of intracellular compartments and in some cell types, is targeted to the plasma membrane, where it is responsible for acidifying the extracellular environment. The sequence is that of V-type proton ATPase subunit G 3 (atp6v1g3) from Xenopus laevis (African clawed frog).